The chain runs to 558 residues: S-layer protein (558 aa).

An N-terminal signal peptide occupies residues 1-28 (MAMSLKKIGAIAVGGAMVATALASGVAA). Asn112, Asn138, Asn158, Asn197, Asn226, Asn291, and Asn374 each carry an N-linked (GlcNAc...) asparagine glycan.

The protein belongs to the Mj S-layer protein family.

The protein localises to the secreted. Its subcellular location is the cell wall. The protein resides in the S-layer. Functionally, S-layer protein. The S-layer is a paracrystalline mono-layered assembly of proteins which coat the surface of the cell. The protein is S-layer protein (sla) of Methanocaldococcus jannaschii (strain ATCC 43067 / DSM 2661 / JAL-1 / JCM 10045 / NBRC 100440) (Methanococcus jannaschii).